The sequence spans 126 residues: MARVKRAVNAQKKRRTTLERASGYRGQRSRLYRKAKEQVTHSLGYAYRDRRARKGDFRRLWIQRINAAARANGITYNRFIQGLKAAEVEVDRRMLAELAVSDPAAFTTLVELAKGALPEDVNAPAA.

A compositionally biased stretch (basic residues) spans 1 to 15 (MARVKRAVNAQKKRR). Positions 1 to 20 (MARVKRAVNAQKKRRTTLER) are disordered.

This sequence belongs to the bacterial ribosomal protein bL20 family.

Binds directly to 23S ribosomal RNA and is necessary for the in vitro assembly process of the 50S ribosomal subunit. It is not involved in the protein synthesizing functions of that subunit. The protein is Large ribosomal subunit protein bL20 of Beutenbergia cavernae (strain ATCC BAA-8 / DSM 12333 / CCUG 43141 / JCM 11478 / NBRC 16432 / NCIMB 13614 / HKI 0122).